Consider the following 148-residue polypeptide: Large ribosomal subunit protein uL13 (148 aa).

The tract at residues 128-148 (PEHPHQAQNPQPFEINAKVEK) is disordered.

The protein belongs to the universal ribosomal protein uL13 family. As to quaternary structure, part of the 50S ribosomal subunit.

Its function is as follows. This protein is one of the early assembly proteins of the 50S ribosomal subunit, although it is not seen to bind rRNA by itself. It is important during the early stages of 50S assembly. This Saccharopolyspora erythraea (strain ATCC 11635 / DSM 40517 / JCM 4748 / NBRC 13426 / NCIMB 8594 / NRRL 2338) protein is Large ribosomal subunit protein uL13.